The following is a 282-amino-acid chain: Bifunctional protein FolD (282 aa).

Residues 164–166 (GRS) and Ser189 each bind NADP(+).

Belongs to the tetrahydrofolate dehydrogenase/cyclohydrolase family. Homodimer.

The catalysed reaction is (6R)-5,10-methylene-5,6,7,8-tetrahydrofolate + NADP(+) = (6R)-5,10-methenyltetrahydrofolate + NADPH. It catalyses the reaction (6R)-5,10-methenyltetrahydrofolate + H2O = (6R)-10-formyltetrahydrofolate + H(+). It participates in one-carbon metabolism; tetrahydrofolate interconversion. Its function is as follows. Catalyzes the oxidation of 5,10-methylenetetrahydrofolate to 5,10-methenyltetrahydrofolate and then the hydrolysis of 5,10-methenyltetrahydrofolate to 10-formyltetrahydrofolate. The protein is Bifunctional protein FolD of Anaeromyxobacter dehalogenans (strain 2CP-C).